We begin with the raw amino-acid sequence, 213 residues long: Thiopurine S-methyltransferase (213 aa).

Residues tryptophan 10, leucine 45, glutamate 66, and arginine 121 each coordinate S-adenosyl-L-methionine.

This sequence belongs to the class I-like SAM-binding methyltransferase superfamily. TPMT family.

Its subcellular location is the cytoplasm. The catalysed reaction is S-adenosyl-L-methionine + a thiopurine = S-adenosyl-L-homocysteine + a thiopurine S-methylether.. The chain is Thiopurine S-methyltransferase from Aliivibrio fischeri (strain ATCC 700601 / ES114) (Vibrio fischeri).